Here is a 181-residue protein sequence, read N- to C-terminus: Calmodulin-like protein 6 (181 aa).

EF-hand domains lie at 33–68, 69–104, 107–142, and 143–178; these read EQIK…LGIN, PTKS…YHEK, NQES…AGEP, and LNEV…ESFK. D156, D158, D160, T162, and E167 together coordinate Ca(2+).

The protein belongs to the calmodulin family. Calglandulin subfamily. Expressed in prostate, thymus, heart, skeleton muscle, bone marrow and ovary.

It localises to the cytoplasm. The protein resides in the nucleus. The chain is Calmodulin-like protein 6 (CALML6) from Homo sapiens (Human).